Reading from the N-terminus, the 1039-residue chain is Isoleucine--tRNA ligase (1039 aa).

Residues 46-56 (PYCSGAIHLGT) carry the 'HIGH' region motif. A 'KMSKS' region motif is present at residues 600–604 (KMSKS). Residue K603 coordinates ATP.

The protein belongs to the class-I aminoacyl-tRNA synthetase family. IleS type 2 subfamily. As to quaternary structure, monomer. Requires Zn(2+) as cofactor.

It is found in the cytoplasm. It catalyses the reaction tRNA(Ile) + L-isoleucine + ATP = L-isoleucyl-tRNA(Ile) + AMP + diphosphate. In terms of biological role, catalyzes the attachment of isoleucine to tRNA(Ile). As IleRS can inadvertently accommodate and process structurally similar amino acids such as valine, to avoid such errors it has two additional distinct tRNA(Ile)-dependent editing activities. One activity is designated as 'pretransfer' editing and involves the hydrolysis of activated Val-AMP. The other activity is designated 'posttransfer' editing and involves deacylation of mischarged Val-tRNA(Ile). This is Isoleucine--tRNA ligase from Methanocaldococcus jannaschii (strain ATCC 43067 / DSM 2661 / JAL-1 / JCM 10045 / NBRC 100440) (Methanococcus jannaschii).